The chain runs to 185 residues: Ribosome-recycling factor (185 aa).

It belongs to the RRF family.

Its subcellular location is the cytoplasm. Functionally, responsible for the release of ribosomes from messenger RNA at the termination of protein biosynthesis. May increase the efficiency of translation by recycling ribosomes from one round of translation to another. The polypeptide is Ribosome-recycling factor (Clostridium kluyveri (strain NBRC 12016)).